The sequence spans 548 residues: CTP synthase (548 aa).

The interval 1–265 (MTRYIFVTGG…DDIICDKLRI (265 aa)) is amidoligase domain. Serine 13 serves as a coordination point for CTP. Serine 13 is a UTP binding site. ATP contacts are provided by residues 14 to 19 (SLGKGI) and aspartate 71. 2 residues coordinate Mg(2+): aspartate 71 and glutamate 139. CTP contacts are provided by residues 146–148 (DIE), 186–191 (KTKPTQ), and lysine 222. UTP contacts are provided by residues 186 to 191 (KTKPTQ) and lysine 222. The 252-residue stretch at 290-541 (NIAMVGKYME…VNAALAYKAA (252 aa)) folds into the Glutamine amidotransferase type-1 domain. Residue glycine 351 coordinates L-glutamine. Residue cysteine 378 is the Nucleophile; for glutamine hydrolysis of the active site. L-glutamine-binding positions include 379-382 (LGMQ), glutamate 402, and arginine 469. Active-site residues include histidine 514 and glutamate 516.

Belongs to the CTP synthase family. In terms of assembly, homotetramer.

The catalysed reaction is UTP + L-glutamine + ATP + H2O = CTP + L-glutamate + ADP + phosphate + 2 H(+). It carries out the reaction L-glutamine + H2O = L-glutamate + NH4(+). It catalyses the reaction UTP + NH4(+) + ATP = CTP + ADP + phosphate + 2 H(+). Its pathway is pyrimidine metabolism; CTP biosynthesis via de novo pathway; CTP from UDP: step 2/2. Its activity is regulated as follows. Allosterically activated by GTP, when glutamine is the substrate; GTP has no effect on the reaction when ammonia is the substrate. The allosteric effector GTP functions by stabilizing the protein conformation that binds the tetrahedral intermediate(s) formed during glutamine hydrolysis. Inhibited by the product CTP, via allosteric rather than competitive inhibition. Its function is as follows. Catalyzes the ATP-dependent amination of UTP to CTP with either L-glutamine or ammonia as the source of nitrogen. Regulates intracellular CTP levels through interactions with the four ribonucleotide triphosphates. In Chromohalobacter salexigens (strain ATCC BAA-138 / DSM 3043 / CIP 106854 / NCIMB 13768 / 1H11), this protein is CTP synthase.